We begin with the raw amino-acid sequence, 949 residues long: Insulin receptor substrate 1 (949 aa).

The 102-residue stretch at 8–109 folds into the PH domain; sequence GMALSGYLKK…WLDKLLVLQR (102 aa). Positions 122–236 constitute an IRS-type PTB domain; it reads YDQVWQVVIQ…SAMSAKTESN (115 aa). A disordered region spans residues 247–270; it reads PDLSHEPMRKRSSSANEASKPINV. Phosphoserine occurs at positions 286, 287, and 342. Residues 304–345 show a composition bias toward polar residues; it reads RNGTLSESSNQTYFGSNHGLRSNTISGNRPHSTNKHSNSPTF. The interval 304–373 is disordered; it reads RNGTLSESSN…SDDNGSYSHY (70 aa). The residue at position 410 (Y410) is a Phosphotyrosine; by INSR. The YXXM motif 1 motif lies at 410–413; sequence YIPM. Residues 530 to 556 form a disordered region; sequence RSQSSITKEGSGYGTSGNRQKKSTSAP. Position 554 is a phosphoserine (S554). Residues 640–643 carry the YXXM motif 2 motif; sequence YLEM. Residues 696–706 show a composition bias toward basic and acidic residues; sequence REQTTSEEKKS. Residues 696–718 form a disordered region; sequence REQTTSEEKKSNSPLNEKPFSLK. The residue at position 892 (Y892) is a Phosphotyrosine; by INSR. Residues 906–949 are disordered; sequence AKYLKRGSRESPPVSACPEDGNTYAKIDFDQSDSSSSSSNIFNT. A phosphoserine mark is found at S913 and S916. At Y929 the chain carries Phosphotyrosine; by INSR. Residues 937–949 show a composition bias toward low complexity; that stretch reads SDSSSSSSNIFNT.

Bindings to phosphatidylinositol 3-kinase and SHP2.

In terms of biological role, activates phosphatidylinositol 3-kinase when bound to the regulatory p85 subunit. May mediate the control of various cellular processes by insulin-like peptides. When phosphorylated by the insulin receptor binds specifically to various cellular proteins containing SH2 domains. Involved in control of cell proliferation, cell size, and body and organ growth throughout development. Also has a role in a signaling pathway controlling the physiological response required to endure periods of low nutrient conditions. Insulin/insulin-like growth factor (IGF) signaling pathway has a role in regulating aging and is necessary in the ovary for vitellogenic maturation. This is Insulin receptor substrate 1 from Drosophila yakuba (Fruit fly).